The primary structure comprises 207 residues: LexA repressor (207 aa).

A DNA-binding region (H-T-H motif) is located at residues 28-48; sequence VREIGEAVGLASSSTVHGHLA. Active-site for autocatalytic cleavage activity residues include S129 and K167.

This sequence belongs to the peptidase S24 family. As to quaternary structure, homodimer.

It carries out the reaction Hydrolysis of Ala-|-Gly bond in repressor LexA.. Functionally, represses a number of genes involved in the response to DNA damage (SOS response), including recA and lexA. In the presence of single-stranded DNA, RecA interacts with LexA causing an autocatalytic cleavage which disrupts the DNA-binding part of LexA, leading to derepression of the SOS regulon and eventually DNA repair. This is LexA repressor from Geobacillus kaustophilus (strain HTA426).